A 151-amino-acid polypeptide reads, in one-letter code: C-C motif chemokine 25 (151 aa).

Residues 1 to 22 (MNLWLLVCLVASLMGAWSTVHT) form the signal peptide. Disulfide bonds link C29/C57 and C30/C73. Residues 94–151 (THSKQHLGSRRNLQDSHLGGQRSNTGMSRLAHSKSKSSRSTRSNKKKTSFLNMANPGP) form a disordered region. The span at 124-141 (AHSKSKSSRSTRSNKKKT) shows a compositional bias: basic residues.

The protein belongs to the intercrine beta (chemokine CC) family.

Its subcellular location is the secreted. In terms of biological role, potentially involved in T-cell development. Recombinant protein shows chemotactic activity on thymocytes, macrophages, THP-1 cells, and dendritics cells but is inactive on peripheral blood lymphocytes and neutrophils. Binds to CCR9. Binds to atypical chemokine receptor ACKR4 and mediates the recruitment of beta-arrestin (ARRB1/2) to ACKR4. This Canis lupus familiaris (Dog) protein is C-C motif chemokine 25 (CCL25).